Reading from the N-terminus, the 435-residue chain is Membrane-bound ghrelin O-acyltransferase MBOAT4 (435 aa).

Topologically, residues 1–5 (MDWLQ) are lumenal. Residues 6-26 (FFFLHPVSLYQGAAFPFALLF) traverse the membrane as a helical segment. The Cytoplasmic segment spans residues 27–40 (NYLCITESFPTRAR). A helical membrane pass occupies residues 41–56 (YLFLLAGGGVLALAAM). Topologically, residues 57 to 59 (GPY) are lumenal. A helical transmembrane segment spans residues 60-76 (ALLIFIPALCAVAMISS). Residues 77-82 (LSPQEV) are Cytoplasmic-facing. Residues 83-101 (HGLTFFFQMGWQTLCHLGL) form a helical membrane-spanning segment. Over 102-120 (HYKEYYLCEPPPVRFYITL) the chain is Lumenal. A helical membrane pass occupies residues 121 to 136 (SSLMLLTQRVTSLSLD). Residues 137–206 (ISEGKVEAAW…YPSISFWALT (70 aa)) are Cytoplasmic-facing. A helical transmembrane segment spans residues 207 to 227 (WRGLQILGLECLKVALRRVVS). The Lumenal segment spans residues 228-240 (AGAGLDDCQRLEC). A helical transmembrane segment spans residues 241 to 261 (IYIMWSTAGLFKLTYYSHWIL). Topologically, residues 262–324 (DDSLLHAAGF…KRLVFQRSRR (63 aa)) are cytoplasmic. Active-site residues include Asn-307 and His-338. The helical transmembrane segment at 325–338 (WPVLQTFAFSAWWH) threads the bilayer. At 339-340 (GL) the chain is on the lumenal side. A helical membrane pass occupies residues 341-357 (HPGQVFGFLCWSVMVKA). The Cytoplasmic portion of the chain corresponds to 358 to 376 (DYLIHTFANGCIRSWPLRL). Residues 377–397 (LYRSLTWAHTQIIIAYVMLAV) traverse the membrane as a helical segment. Residues 398 to 407 (EGRSFSSLCR) lie on the Lumenal side of the membrane. The helical transmembrane segment at 408 to 428 (LCCSYNSIFPVTYCLLLFLLA) threads the bilayer. Topologically, residues 429-435 (RRKHKCN) are cytoplasmic.

Belongs to the membrane-bound acyltransferase family. In terms of assembly, monomer. Post-translationally, not glycosylated.

It localises to the endoplasmic reticulum membrane. The catalysed reaction is octanoyl-CoA + L-seryl-[protein] = O-octanoyl-L-seryl-[protein] + CoA. The enzyme catalyses decanoyl-CoA + L-seryl-[protein] = O-decanoyl-L-seryl-[protein] + CoA. It carries out the reaction L-seryl-[protein] + acetyl-CoA = O-acetyl-L-seryl-[protein] + CoA. It catalyses the reaction L-seryl-[protein] + butanoyl-CoA = O-butanoyl-L-seryl-[protein] + CoA. The catalysed reaction is pentanoyl-CoA + L-seryl-[protein] = O-pentanoyl-L-seryl-[protein] + CoA. The enzyme catalyses hexanoyl-CoA + L-seryl-[protein] = O-hexanoyl-L-seryl-[protein] + CoA. It carries out the reaction heptanoyl-CoA + L-seryl-[protein] = O-heptanoyl-L-seryl-[protein] + CoA. It catalyses the reaction nonanoyl-CoA + L-seryl-[protein] = O-nonanoyl-L-seryl-[protein] + CoA. The catalysed reaction is L-seryl-[protein] + dodecanoyl-CoA = O-dodecanoyl-L-seryl-[protein] + CoA. The enzyme catalyses L-seryl-[protein] + tetradecanoyl-CoA = O-tetradecanoyl-L-seryl-[protein] + CoA. It carries out the reaction a fatty acyl-CoA + L-seryl-[protein] = O-fatty acyl-L-seryl-[protein] + CoA. In terms of biological role, catalyzes ghrelin acylation at 'Ser-3' using preferentially octanoyl-CoA, hexanoyl-CoA and decanoyl-CoA as acyl-CoA donors leading to ghrelin activity. In vitro uses also acyl-CoA donors of different lengths from short-chain (C2) to long-chain fatty acids (C16) knowing that acyl-CoA donors from butanoyl-CoA (C4) to dodecanoyl-CoA (C12) are more efficient compared to longer acyl-CoA donors, such as myristoyl-CoA (C14) and palmitoyl-CoA (C16) that are not efficient. The sequence is that of Membrane-bound ghrelin O-acyltransferase MBOAT4 from Rattus norvegicus (Rat).